The chain runs to 68 residues: Medusin-DA1 (68 aa).

A signal peptide spans 1–22 (MAFLKKSLFLVLFLGLVSLSVC). The propeptide occupies 23-48 (EEEKRENEEEKNEQEEDDREERNEEK). Residues 25-47 (EKRENEEEKNEQEEDDREERNEE) are disordered. Residues 31–41 (EEKNEQEEDDR) are compositionally biased toward acidic residues. A Leucine amide modification is found at Leu-67.

The protein belongs to the frog skin active peptide (FSAP) family. Medusin subfamily. Expressed by the skin glands.

It is found in the secreted. Functionally, antimicrobial peptide with activity against Gram-positive bacteria (S.aureus, MIC=32 mg/L) and fungi (C.albicans, MIC=64 mg/L). Shows weak hemolytic activity. This chain is Medusin-DA1, found in Agalychnis dacnicolor (Giant Mexican leaf frog).